Reading from the N-terminus, the 418-residue chain is MIFDKDNFKEFDQELWQAIHDEEIRQQNNIELIASENVVSKAVMAAQGSVLTNKYAEGYPSHRYYGGTDCVDVVESLAIERAKTLFNAEFANVQPHSGSQANAAAYMALIEPGDTVLGMDLAAGGHLTHGASVSFSGKTYHFVSYSVDPKTEMLDYDNILKIAQETQPKLIVAGASAYSRIIDFEKFRQIADAVDAYLMVDMAHIAGLVASGHHPSPIPYAHVTTTTTHKTLRGPRGGLILTNDEAIAKKINSAVFPGLQGGPLEHVIAAKAVALKEALDPSFKIYGEDIIKNAQAMAKVFKEDDDFHLISDGTDNHLFLVDVTKVIENGKKAQNVLEEVNITLNKNSIPFERLSPFKTSGIRIGTPAITSRGMGVEESRRIAELMIKALKNHENQDVLTEVRQEIKSLTDAFPLYEN.

(6S)-5,6,7,8-tetrahydrofolate-binding positions include L121 and 125–127 (GHL). K230 carries the N6-(pyridoxal phosphate)lysine modification. 355–357 (SPF) contacts (6S)-5,6,7,8-tetrahydrofolate.

This sequence belongs to the SHMT family. As to quaternary structure, homodimer. Pyridoxal 5'-phosphate serves as cofactor.

The protein localises to the cytoplasm. The enzyme catalyses (6R)-5,10-methylene-5,6,7,8-tetrahydrofolate + glycine + H2O = (6S)-5,6,7,8-tetrahydrofolate + L-serine. It participates in one-carbon metabolism; tetrahydrofolate interconversion. It functions in the pathway amino-acid biosynthesis; glycine biosynthesis; glycine from L-serine: step 1/1. Its function is as follows. Catalyzes the reversible interconversion of serine and glycine with tetrahydrofolate (THF) serving as the one-carbon carrier. This reaction serves as the major source of one-carbon groups required for the biosynthesis of purines, thymidylate, methionine, and other important biomolecules. Also exhibits THF-independent aldolase activity toward beta-hydroxyamino acids, producing glycine and aldehydes, via a retro-aldol mechanism. The sequence is that of Serine hydroxymethyltransferase from Streptococcus agalactiae serotype V (strain ATCC BAA-611 / 2603 V/R).